The following is a 371-amino-acid chain: Peptidyl-prolyl cis-trans isomerase D (371 aa).

One can recognise a PPIase cyclophilin-type domain in the interval 11-172 (FFDIQIGNEK…KDVTIVECGE (162 aa)). Residues 175 to 195 (GQDYDDADKQTPDATGDPYED) form a disordered region. TPR repeat units follow at residues 214 to 247 (ASEL…LHEF), 267 to 300 (FALH…ANAA), and 308 to 341 (AKAY…APGD).

This sequence belongs to the cyclophilin-type PPIase family. PPIase D subfamily.

It localises to the cytoplasm. The enzyme catalyses [protein]-peptidylproline (omega=180) = [protein]-peptidylproline (omega=0). Functionally, PPIases accelerate the folding of proteins. It catalyzes the cis-trans isomerization of proline imidic peptide bonds in oligopeptides. This chain is Peptidyl-prolyl cis-trans isomerase D (cpr6), found in Aspergillus oryzae (strain ATCC 42149 / RIB 40) (Yellow koji mold).